A 61-amino-acid chain; its full sequence is Small ribosomal subunit protein uS14 (61 aa).

4 residues coordinate Zn(2+): cysteine 24, cysteine 27, cysteine 40, and cysteine 43.

It belongs to the universal ribosomal protein uS14 family. Zinc-binding uS14 subfamily. As to quaternary structure, part of the 30S ribosomal subunit. Contacts proteins S3 and S10. Requires Zn(2+) as cofactor.

Binds 16S rRNA, required for the assembly of 30S particles and may also be responsible for determining the conformation of the 16S rRNA at the A site. This is Small ribosomal subunit protein uS14 from Borrelia duttonii (strain Ly).